The following is a 195-amino-acid chain: A-type ATP synthase subunit E (195 aa).

This sequence belongs to the V-ATPase E subunit family. As to quaternary structure, has multiple subunits with at least A(3), B(3), C, D, E, F, H, I and proteolipid K(x).

The protein resides in the cell membrane. Component of the A-type ATP synthase that produces ATP from ADP in the presence of a proton gradient across the membrane. The chain is A-type ATP synthase subunit E from Staphylothermus marinus (strain ATCC 43588 / DSM 3639 / JCM 9404 / F1).